The sequence spans 467 residues: Membrane-bound lytic murein transglycosylase F (467 aa).

The signal sequence occupies residues 1-33 (MTELFRHSKHLLASLALLSVLGLMLAMHPSPSA). A non-LT domain region spans residues 34–266 (IERIMARGEL…KLEDRFYGHV (233 aa)). Positions 268–467 (QFNLYAARSF…RRDDTLIALN (200 aa)) are LT domain. Glu313 is an active-site residue.

This sequence in the N-terminal section; belongs to the bacterial solute-binding protein 3 family. In the C-terminal section; belongs to the transglycosylase Slt family.

The protein resides in the cell outer membrane. The enzyme catalyses Exolytic cleavage of the (1-&gt;4)-beta-glycosidic linkage between N-acetylmuramic acid (MurNAc) and N-acetylglucosamine (GlcNAc) residues in peptidoglycan, from either the reducing or the non-reducing ends of the peptidoglycan chains, with concomitant formation of a 1,6-anhydrobond in the MurNAc residue.. Its function is as follows. Murein-degrading enzyme that degrades murein glycan strands and insoluble, high-molecular weight murein sacculi, with the concomitant formation of a 1,6-anhydromuramoyl product. Lytic transglycosylases (LTs) play an integral role in the metabolism of the peptidoglycan (PG) sacculus. Their lytic action creates space within the PG sacculus to allow for its expansion as well as for the insertion of various structures such as secretion systems and flagella. This chain is Membrane-bound lytic murein transglycosylase F, found in Alcanivorax borkumensis (strain ATCC 700651 / DSM 11573 / NCIMB 13689 / SK2).